Reading from the N-terminus, the 115-residue chain is Large ribosomal subunit protein bL19 (115 aa).

It belongs to the bacterial ribosomal protein bL19 family.

Its function is as follows. This protein is located at the 30S-50S ribosomal subunit interface and may play a role in the structure and function of the aminoacyl-tRNA binding site. This chain is Large ribosomal subunit protein bL19, found in Wigglesworthia glossinidia brevipalpis.